The chain runs to 135 residues: RuBisCO chaperone RbcX (135 aa).

Residues 103-135 form a disordered region; it reads QHLERMTQVSLSHPSPESEQQQFSDPDWDNLAS. Polar residues predominate over residues 109–126; it reads TQVSLSHPSPESEQQQFS.

This sequence belongs to the RbcX family. Homodimer. Interacts with the exposed C-terminal peptide of RbcL ('Glu-459-Asp-468'); binds 1 RbcL peptide per homodimer. Contacts a second RbcL monomer via its peripheral polar surface. A slightly longer RbcL peptide binds to RbcX2 with a higher affinity.

The protein resides in the carboxysome. It localises to the cytoplasm. Its function is as follows. An RbcL-specific chaperone. The central cleft of the RbcX homodimer (RbcX2) binds the C-terminus of an RbcL monomer, stabilizing the C-terminus and probably preventing its reassociation with chaperonin GroEL-ES. At the same time the peripheral region of RbcX2 binds a second RbcL monomer, bridging the RbcL homodimers in the correct orientation. The RbcX2(2)-bound RbcL dimers then assemble into the RbcL8 core (RbcL8-(RbcX2)8). RbcS binding triggers the release of RbcX2. Functionally, required for optimal reconstitution of RuBisCO upon expression of rbcL-rbcS subunits in E.coli. This chain is RuBisCO chaperone RbcX, found in Anabaena sp. (strain CA / ATCC 33047).